Reading from the N-terminus, the 142-residue chain is Chorion class A protein Ld19 (142 aa).

The signal sequence occupies residues 1 to 18; the sequence is MNSFALLLVCIQACLVQS.

This sequence belongs to the chorion protein family.

This protein is one of many from the eggshell of the gypsy moth. This is Chorion class A protein Ld19 from Lymantria dispar (Gypsy moth).